Reading from the N-terminus, the 1222-residue chain is ATP-dependent helicase/nuclease subunit A (1222 aa).

One can recognise a UvrD-like helicase ATP-binding domain in the interval Q39–Q495. ATP is bound at residue A60 to T67. The UvrD-like helicase C-terminal domain maps to Q524 to G810.

The protein belongs to the helicase family. AddA subfamily. As to quaternary structure, heterodimer of AddA and AddB/RexB. Requires Mg(2+) as cofactor.

The enzyme catalyses Couples ATP hydrolysis with the unwinding of duplex DNA by translocating in the 3'-5' direction.. It carries out the reaction ATP + H2O = ADP + phosphate + H(+). Functionally, the heterodimer acts as both an ATP-dependent DNA helicase and an ATP-dependent, dual-direction single-stranded exonuclease. Recognizes the chi site generating a DNA molecule suitable for the initiation of homologous recombination. The AddA nuclease domain is required for chi fragment generation; this subunit has the helicase and 3' -&gt; 5' nuclease activities. The protein is ATP-dependent helicase/nuclease subunit A of Streptococcus pyogenes serotype M28 (strain MGAS6180).